Consider the following 315-residue polypeptide: DNA-directed RNA polymerase subunit alpha (315 aa).

Positions 1 to 228 are alpha N-terminal domain (alpha-NTD); sequence MLEIEKPKIE…EHFKLFMTLT (228 aa). The tract at residues 245-315 is alpha C-terminal domain (alpha-CTD); it reads KEKVLEMTIE…LGLSLKLNDE (71 aa).

It belongs to the RNA polymerase alpha chain family. As to quaternary structure, homodimer. The RNAP catalytic core consists of 2 alpha, 1 beta, 1 beta' and 1 omega subunit. When a sigma factor is associated with the core the holoenzyme is formed, which can initiate transcription.

It catalyses the reaction RNA(n) + a ribonucleoside 5'-triphosphate = RNA(n+1) + diphosphate. In terms of biological role, DNA-dependent RNA polymerase catalyzes the transcription of DNA into RNA using the four ribonucleoside triphosphates as substrates. The polypeptide is DNA-directed RNA polymerase subunit alpha (Clostridium acetobutylicum (strain ATCC 824 / DSM 792 / JCM 1419 / IAM 19013 / LMG 5710 / NBRC 13948 / NRRL B-527 / VKM B-1787 / 2291 / W)).